Reading from the N-terminus, the 746-residue chain is Taurocyamine kinase (746 aa).

Approximate repeat units follow at residues 31–393 (MQVE…PEGV) and 394–705 (MPVE…YGEH). A Phosphagen kinase N-terminal 1 domain is found at 35 to 116 (SLQNLQAKIR…FDAVIADYHK (82 aa)). Positions 146–382 (LVVSTRVRLG…RALLELEVML (237 aa)) constitute a Phosphagen kinase C-terminal 1 domain. Residues 149–153 (STRVR), His212, and Arg256 each bind ATP. Residue Cys298 is part of the active site. ATP contacts are provided by residues 307–311 (RASVH) and 335–340 (RGTHGE). Residues 398–479 (PLTYLAKLLE…LDPLICDYHG (82 aa)) enclose the Phosphagen kinase N-terminal 2 domain. In terms of domain architecture, Phosphagen kinase C-terminal 2 spans 509 to 746 (FIVSTRVRVG…AKMIEIEKGL (238 aa)). ATP is bound by residues 512–516 (STRVR), His575, and Arg619. Cys661 is a catalytic residue. ATP contacts are provided by residues 670 to 674 (RASVL) and 699 to 704 (RGLYGE).

This sequence belongs to the ATP:guanido phosphotransferase family. It depends on Mg(2+) as a cofactor.

It catalyses the reaction taurocyamine + ATP = N-phosphotaurocyamine + ADP + H(+). This family of enzymes reversibly catalyzes the transfer of phosphate between ATP and various phosphogens (e.g. creatine phosphate). This chain is Taurocyamine kinase, found in Schistosoma mansoni (Blood fluke).